Here is a 343-residue protein sequence, read N- to C-terminus: UDP-3-O-acylglucosamine N-acyltransferase (343 aa).

H239 (proton acceptor) is an active-site residue.

Belongs to the transferase hexapeptide repeat family. LpxD subfamily. In terms of assembly, homotrimer.

It catalyses the reaction a UDP-3-O-[(3R)-3-hydroxyacyl]-alpha-D-glucosamine + a (3R)-hydroxyacyl-[ACP] = a UDP-2-N,3-O-bis[(3R)-3-hydroxyacyl]-alpha-D-glucosamine + holo-[ACP] + H(+). It participates in bacterial outer membrane biogenesis; LPS lipid A biosynthesis. Its function is as follows. Catalyzes the N-acylation of UDP-3-O-acylglucosamine using 3-hydroxyacyl-ACP as the acyl donor. Is involved in the biosynthesis of lipid A, a phosphorylated glycolipid that anchors the lipopolysaccharide to the outer membrane of the cell. The polypeptide is UDP-3-O-acylglucosamine N-acyltransferase (Vibrio parahaemolyticus serotype O3:K6 (strain RIMD 2210633)).